Here is a 95-residue protein sequence, read N- to C-terminus: Cytochrome b (95 aa).

3 helical membrane-spanning segments follow: residues 1 to 16 (GLCL…FLAM), 40 to 61 (WLIR…YLHI), and 76 to 95 (WNIG…VGYV). H46 and H60 together coordinate heme b.

It belongs to the cytochrome b family. In terms of assembly, the cytochrome bc1 complex contains 3 respiratory subunits (MT-CYB, CYC1 and UQCRFS1), 2 core proteins (UQCRC1 and UQCRC2) and probably 6 low-molecular weight proteins. Requires heme b as cofactor.

It is found in the mitochondrion inner membrane. Component of the ubiquinol-cytochrome c reductase complex (complex III or cytochrome b-c1 complex) that is part of the mitochondrial respiratory chain. The b-c1 complex mediates electron transfer from ubiquinol to cytochrome c. Contributes to the generation of a proton gradient across the mitochondrial membrane that is then used for ATP synthesis. In Gomphosus varius (Bird wrasse), this protein is Cytochrome b (mt-cyb).